Here is a 337-residue protein sequence, read N- to C-terminus: Large ribosomal subunit protein uL3 (337 aa).

The interval 1 to 29 (MPKINRPRRGSLAFSPRKRAQSPIPKYKS) is disordered.

It belongs to the universal ribosomal protein uL3 family. In terms of assembly, part of the 50S ribosomal subunit. Forms a cluster with proteins L14 and L24e.

In terms of biological role, one of the primary rRNA binding proteins, it binds directly near the 3'-end of the 23S rRNA, where it nucleates assembly of the 50S subunit. The sequence is that of Large ribosomal subunit protein uL3 from Methanoregula boonei (strain DSM 21154 / JCM 14090 / 6A8).